Reading from the N-terminus, the 831-residue chain is Zinc phosphodiesterase ELAC protein 2 (831 aa).

A mitochondrion-targeting transit peptide spans 1–16 (MWALRSLLRPLGLRTM). Disordered regions lie at residues 15–47 (TMSQGSARRPRPSKDPLRHLRTREKRGPGPGGP) and 179–227 (SERR…ANRK). Residues 186 to 212 (QQPSQSPRTSPNRLSPKQSSDSGSAEN) show a composition bias toward polar residues. Residues Ser191, Ser195, Ser200, Ser204, and Ser732 each carry the phosphoserine modification. Residues 791–831 (LTQQADSPEDREPQQKRAHTDEPHSPQSKKESVANTLGARV) are disordered. The residue at position 792 (Thr792) is a Phosphothreonine. Ser797 and Ser815 each carry phosphoserine. Residues 798–822 (PEDREPQQKRAHTDEPHSPQSKKES) show a composition bias toward basic and acidic residues.

Belongs to the RNase Z family. In terms of assembly, homodimer. Interacts with PTCD1. Zn(2+) serves as cofactor.

The protein localises to the mitochondrion. The protein resides in the mitochondrion matrix. It is found in the mitochondrion nucleoid. It localises to the nucleus. It carries out the reaction Endonucleolytic cleavage of RNA, removing extra 3' nucleotides from tRNA precursor, generating 3' termini of tRNAs. A 3'-hydroxy group is left at the tRNA terminus and a 5'-phosphoryl group is left at the trailer molecule.. In terms of biological role, zinc phosphodiesterase, which displays mitochondrial tRNA 3'-processing endonuclease activity. Involved in tRNA maturation, by removing a 3'-trailer from precursor tRNA. Associates with mitochondrial DNA complexes at the nucleoids to initiate RNA processing and ribosome assembly. The chain is Zinc phosphodiesterase ELAC protein 2 (Elac2) from Mus musculus (Mouse).